The following is a 303-amino-acid chain: Protein translocase subunit SecF (303 aa).

Helical transmembrane passes span serine 28 to isoleucine 48, isoleucine 140 to valine 160, tryptophan 164 to phenylalanine 184, leucine 194 to isoleucine 214, isoleucine 246 to alanine 266, and valine 272 to isoleucine 292.

This sequence belongs to the SecD/SecF family. SecF subfamily. As to quaternary structure, forms a complex with SecD. Part of the essential Sec protein translocation apparatus which comprises SecA, SecYEG and auxiliary proteins SecDF-YajC and YidC.

The protein localises to the cell inner membrane. Part of the Sec protein translocase complex. Interacts with the SecYEG preprotein conducting channel. SecDF uses the proton motive force (PMF) to complete protein translocation after the ATP-dependent function of SecA. The chain is Protein translocase subunit SecF from Rickettsia bellii (strain OSU 85-389).